Consider the following 87-residue polypeptide: Tan_10cys (87 aa).

The first 21 residues, 1–21 (MNLKVLFLLAMVLVTLCLGED), serve as a signal peptide directing secretion. The propeptide occupies 22 to 27 (RVTDRR).

Belongs to the teretoxin C (TC) superfamily. Contains 5 disulfide bonds. In terms of tissue distribution, expressed by the venom duct.

Its subcellular location is the secreted. The protein is Tan_10cys of Terebra anilis (Auger snail).